The following is a 170-amino-acid chain: Large ribosomal subunit protein bL9 (170 aa).

A disordered region spans residues 149-170 (RTEEADAEESAAEEPAVEEAAE). The segment covering 153 to 170 (ADAEESAAEEPAVEEAAE) has biased composition (acidic residues).

It belongs to the bacterial ribosomal protein bL9 family.

Its function is as follows. Binds to the 23S rRNA. The sequence is that of Large ribosomal subunit protein bL9 from Oleidesulfovibrio alaskensis (strain ATCC BAA-1058 / DSM 17464 / G20) (Desulfovibrio alaskensis).